The following is a 608-amino-acid chain: RAS guanyl-releasing protein 2 (608 aa).

The 123-residue stretch at 4–126 (TLDLDKGCTV…SLIDIESVPT (123 aa)) folds into the N-terminal Ras-GEF domain. A phosphoserine mark is found at S116, S117, and S147. Residues 154 to 387 (EPMELAEHLT…YQLSLQREPR (234 aa)) form the Ras-GEF domain. The disordered stretch occupies residues 382–405 (LQREPRSKSSPTSPTSCTPPPRPP). EF-hand domains lie at 426–461 (HIEKMVESVFRNFDVDGDGHISQEEFQIIRGNFPYL) and 463–490 (AFGDLDQNQDGCISREEMISYFLRSSSV). The Ca(2+) site is built by D439, D441, D443, H445, E450, D468, N470, D472, C474, and E479. A Phorbol-ester/DAG-type zinc finger spans residues 498 to 548 (VHNFQESNSLRPVACRHCKALILGIYKQGLKCRACGVNCHKQCKERLSVEC). A phosphoserine mark is found at S554 and S575. Residues 555 to 596 (VSLEGSAPSPSPTHTHHRAFSFSLPRPGRRSSRPPEIREEEV) form a disordered region.

The protein belongs to the RASGRP family. In terms of assembly, forms a signaling complex with RAP1 and BRAF. Interacts with F-actin. Interacts with RAP1. As to expression, detected in megakaryocytes, platelet and neutrophils but not in lymphocytes (at protein level). Isoform 1 and isoform 3 are detected in brain basal glanglia, heart, lung, spleen, liver and kidney interstitial cells.

The protein resides in the cytoplasm. The protein localises to the cytosol. It is found in the cell membrane. It localises to the synapse. Its subcellular location is the synaptosome. The protein resides in the cell projection. The protein localises to the ruffle membrane. In terms of biological role, functions as a calcium- and DAG-regulated nucleotide exchange factor specifically activating Rap through the exchange of bound GDP for GTP. May also activate other GTPases such as RRAS, RRAS2, NRAS, KRAS but not HRAS. Functions in aggregation of platelets and adhesion of T-lymphocytes and neutrophils probably through inside-out integrin activation. May function in the muscarinic acetylcholine receptor M1/CHRM1 signaling pathway. This is RAS guanyl-releasing protein 2 (Rasgrp2) from Mus musculus (Mouse).